The chain runs to 156 residues: S-ribosylhomocysteine lyase (156 aa).

Residues His-53, His-57, and Cys-122 each contribute to the Fe cation site.

It belongs to the LuxS family. Homodimer. It depends on Fe cation as a cofactor.

The catalysed reaction is S-(5-deoxy-D-ribos-5-yl)-L-homocysteine = (S)-4,5-dihydroxypentane-2,3-dione + L-homocysteine. In terms of biological role, involved in the synthesis of autoinducer 2 (AI-2) which is secreted by bacteria and is used to communicate both the cell density and the metabolic potential of the environment. The regulation of gene expression in response to changes in cell density is called quorum sensing. Catalyzes the transformation of S-ribosylhomocysteine (RHC) to homocysteine (HC) and 4,5-dihydroxy-2,3-pentadione (DPD). In Finegoldia magna (strain ATCC 29328 / DSM 20472 / WAL 2508) (Peptostreptococcus magnus), this protein is S-ribosylhomocysteine lyase.